A 334-amino-acid chain; its full sequence is Testis-specific Y-encoded protein 1 (334 aa).

Phosphoserine is present on S4. Disordered regions lie at residues 27–46 and 96–146; these read LEGEPSVQAPEQSPGAPAGD and NEGE…AERR. Basic and acidic residues-rich tracts occupy residues 96–108 and 115–128; these read NEGEEVKDQKQEG and ELEKNPEQACDSKD.

Belongs to the nucleosome assembly protein (NAP) family. In terms of processing, phosphorylated. In terms of tissue distribution, testis.

It is found in the cytoplasm. It localises to the nucleus. May be involved in sperm differentiation and proliferation. The sequence is that of Testis-specific Y-encoded protein 1 (Tspy1) from Rattus norvegicus (Rat).